The following is a 56-amino-acid chain: Large ribosomal subunit protein uL30 (56 aa).

This sequence belongs to the universal ribosomal protein uL30 family. As to quaternary structure, part of the 50S ribosomal subunit.

The sequence is that of Large ribosomal subunit protein uL30 from Oleidesulfovibrio alaskensis (strain ATCC BAA-1058 / DSM 17464 / G20) (Desulfovibrio alaskensis).